The primary structure comprises 871 residues: MSKATKYDPKKVERQFYQIWETRGYFETDGNKKIQNGKTFCIMMPPPNVTGRLHIGHALTFTLQDIMVRYKRMDGYETLWQPGTDHAGIATQNVVEKQLLSKGIKKEEIGREKFLEYVWKWKEESGNAIVTQLRLLGVSPAWSRERFTMDKGLKNAVREAFVNLYYEGLIVKGNYMINWCTHDGALSDIEVEYEEKEGALYHIKYPIVGSDEYLVVATTRPETYFGDTAVMVNPNDERYKHLIGKKVRLPLINREIPIIADEHVDMEFGTGAVKVTPAHDPNDYEVGKRHNLPFITIFDENGILNEEAGEFAGIERLEARKKVVEKLEQEGFIEKIEPHKHQVGHCYRCGNVVEPYISPQWFVKAEIAKEAVKKANEGETKFYPPQWLNNFNAWMRELRDWCISRQLWWGHRIPVWYCRACGHEWASKKEHEESCPKCGSTDIYQDPDVLDTWFSSALWPFSTLGWGNGDWGKGVKWFEDDLKKFYPNDLLITGFDILFFWVARMMMMGEHFLHKLPFKDVYLHALVRDEHGQKMSKSRGNVIDPIDTIEEYSADALRFTLAALAVQGRDIRLSKERLELYRNFTNKLYNAARFLQIHQEKFDDLQNIQIKTDLGKYILSRFGLAIQEVRNNLNSYRFNDAATTLYRFLWGEFCDWGIELSKVNKDAIAELGAIFKESMKLLHPFMPFITEFLYQELSGTSIEENESIMIQPYPKAAPIDEEIMKRFETIIDAIVSIRRAKALIDMANKTIPKVLIKGDLEESAKAYISKLAKVETIEFVSEPAENAVTDIGNYVEVFIPLEGIDLTPILNRLNKQKEKLQKEIDKLSRMLSNENFVKNAPQAVVEQNRAALAEAQNRLATIEEELARLTR.

The 'HIGH' region motif lies at proline 47–histidine 57. The 'KMSKS' region motif lies at lysine 534–serine 538. ATP is bound at residue lysine 537. The stretch at aspartate 805–arginine 871 forms a coiled coil.

This sequence belongs to the class-I aminoacyl-tRNA synthetase family. ValS type 1 subfamily. In terms of assembly, monomer.

It localises to the cytoplasm. It catalyses the reaction tRNA(Val) + L-valine + ATP = L-valyl-tRNA(Val) + AMP + diphosphate. Catalyzes the attachment of valine to tRNA(Val). As ValRS can inadvertently accommodate and process structurally similar amino acids such as threonine, to avoid such errors, it has a 'posttransfer' editing activity that hydrolyzes mischarged Thr-tRNA(Val) in a tRNA-dependent manner. The protein is Valine--tRNA ligase of Nitratiruptor sp. (strain SB155-2).